The sequence spans 299 residues: Sugar transporter SWEET1 (299 aa).

In terms of domain architecture, MtN3/slv 1 spans 7–91; that stretch reads QVLSISAITT…CVFFLIYSLP (85 aa). A run of 7 helical transmembrane segments spans residues 8 to 28, 36 to 56, 67 to 87, 95 to 115, 124 to 144, 155 to 175, and 180 to 200; these read VLSI…IPIC, AVGD…SFWL, MIIV…FFLI, FTCQ…WIAL, VICM…LGVV, LPMC…GNLV, and IIIP…LFVV. The 85-residue stretch at 121–205 folds into the MtN3/slv 2 domain; sequence YLGVICMTFN…ALFVVLPIRE (85 aa). Residues 230–299 form a disordered region; the sequence is RGDCIVSSPP…DPDLSSIQSP (70 aa). A compositionally biased stretch (basic and acidic residues) spans 247–261; the sequence is NETRSDVEDKFDKLM. A compositionally biased stretch (low complexity) spans 276–299; sequence SMGSPPSYKSRSSSDPDLSSIQSP.

It belongs to the SWEET sugar transporter family.

It is found in the golgi apparatus membrane. It localises to the cell membrane. Mediates both low-affinity uptake and efflux of sugar across the membrane. This chain is Sugar transporter SWEET1 (swt-1), found in Caenorhabditis elegans.